We begin with the raw amino-acid sequence, 314 residues long: L-lactate dehydrogenase 1 (314 aa).

Residues valine 16, aspartate 37, lysine 42, tyrosine 68, and 82–83 (GL) each bind NAD(+). Substrate contacts are provided by residues glutamine 85, arginine 91, and 123–126 (NPVD). NAD(+)-binding positions include 121-123 (ATN) and serine 146. 151–154 (DSAR) contributes to the substrate binding site. Beta-D-fructose 1,6-bisphosphate-binding residues include arginine 156 and histidine 171. Histidine 178 (proton acceptor) is an active-site residue. Tyrosine 223 is subject to Phosphotyrosine. Threonine 232 is a binding site for substrate.

It belongs to the LDH/MDH superfamily. LDH family. As to quaternary structure, homotetramer.

Its subcellular location is the cytoplasm. It carries out the reaction (S)-lactate + NAD(+) = pyruvate + NADH + H(+). Its pathway is fermentation; pyruvate fermentation to lactate; (S)-lactate from pyruvate: step 1/1. Its activity is regulated as follows. Allosterically activated by fructose 1,6-bisphosphate (FBP). In terms of biological role, catalyzes the conversion of lactate to pyruvate. This is L-lactate dehydrogenase 1 from Bacillus cereus (strain ATCC 14579 / DSM 31 / CCUG 7414 / JCM 2152 / NBRC 15305 / NCIMB 9373 / NCTC 2599 / NRRL B-3711).